Here is a 411-residue protein sequence, read N- to C-terminus: MNLAVIGINYNNTPIDIREKVSFSKSQKYKACTYLIKKGISEIIIVSTCNRSEIYICSDEIDSHINEVVNFYKIFFNVESVNEYIFIKKDKEAVSHIYNVSAGLDSMILGEDQILGQVKEALRYSMENKFSRKVLNKLFREAITSAKKIKSELKISETPISMVYIAIKLLEKNIGTLKGKKACIIGAGDMGRLALKHLINEELEEIFVANRTYNNVIDLLKEFPKIKLIDYEKKYEILDNVDILITATAAPHLIIKKEQLQNIKQELYIMDLALPRDVEKSAGDIENIHLYDVDDFKNISDSNKIKREELSLIAKDSIDSYVNEFNQWMKSLKVDNTIKDLNNRCRDIKDEYLGYITKKIDLNERDKEILEKMLFGALKKVVKEPILNLKELKDEDEINKYIKSVNELFKF.

Residues 48–51 (TCNR), serine 106, 111–113 (EDQ), and glutamine 117 contribute to the substrate site. Cysteine 49 serves as the catalytic Nucleophile. 186 to 191 (GAGDMG) provides a ligand contact to NADP(+).

It belongs to the glutamyl-tRNA reductase family. In terms of assembly, homodimer.

It carries out the reaction (S)-4-amino-5-oxopentanoate + tRNA(Glu) + NADP(+) = L-glutamyl-tRNA(Glu) + NADPH + H(+). It participates in porphyrin-containing compound metabolism; protoporphyrin-IX biosynthesis; 5-aminolevulinate from L-glutamyl-tRNA(Glu): step 1/2. In terms of biological role, catalyzes the NADPH-dependent reduction of glutamyl-tRNA(Glu) to glutamate 1-semialdehyde (GSA). This chain is Glutamyl-tRNA reductase, found in Clostridium novyi (strain NT).